We begin with the raw amino-acid sequence, 255 residues long: tRNA (guanine-N(1)-)-methyltransferase (255 aa).

S-adenosyl-L-methionine is bound by residues Gly113 and 133 to 138 (IGDYVL).

Belongs to the RNA methyltransferase TrmD family. As to quaternary structure, homodimer.

It is found in the cytoplasm. It carries out the reaction guanosine(37) in tRNA + S-adenosyl-L-methionine = N(1)-methylguanosine(37) in tRNA + S-adenosyl-L-homocysteine + H(+). Functionally, specifically methylates guanosine-37 in various tRNAs. This is tRNA (guanine-N(1)-)-methyltransferase from Escherichia coli O127:H6 (strain E2348/69 / EPEC).